The chain runs to 128 residues: uncharacterized protein (128 aa).

2 helical membrane passes run 33–53 and 61–81; these read LLYI…VCYV and FFCW…VIIY. The span at 99-120 shows a compositional bias: polar residues; it reads DSLNQNVGESQSNEPPKYTSTF. Residues 99–128 are disordered; the sequence is DSLNQNVGESQSNEPPKYTSTFMDELDKQD.

The protein localises to the membrane. This is an uncharacterized protein from Schizosaccharomyces pombe (strain 972 / ATCC 24843) (Fission yeast).